The sequence spans 316 residues: 4-hydroxy-3-methylbut-2-enyl diphosphate reductase (316 aa).

Cysteine 12 is a [4Fe-4S] cluster binding site. The (2E)-4-hydroxy-3-methylbut-2-enyl diphosphate site is built by histidine 41 and histidine 74. Dimethylallyl diphosphate is bound by residues histidine 41 and histidine 74. 2 residues coordinate isopentenyl diphosphate: histidine 41 and histidine 74. Residue cysteine 96 participates in [4Fe-4S] cluster binding. Histidine 124 lines the (2E)-4-hydroxy-3-methylbut-2-enyl diphosphate pocket. Histidine 124 contacts dimethylallyl diphosphate. An isopentenyl diphosphate-binding site is contributed by histidine 124. Residue glutamate 126 is the Proton donor of the active site. Threonine 167 lines the (2E)-4-hydroxy-3-methylbut-2-enyl diphosphate pocket. Cysteine 197 serves as a coordination point for [4Fe-4S] cluster. Serine 225, serine 226, asparagine 227, and serine 269 together coordinate (2E)-4-hydroxy-3-methylbut-2-enyl diphosphate. Residues serine 225, serine 226, asparagine 227, and serine 269 each coordinate dimethylallyl diphosphate. Isopentenyl diphosphate-binding residues include serine 225, serine 226, asparagine 227, and serine 269.

The protein belongs to the IspH family. Homodimer. Requires [4Fe-4S] cluster as cofactor.

It catalyses the reaction isopentenyl diphosphate + 2 oxidized [2Fe-2S]-[ferredoxin] + H2O = (2E)-4-hydroxy-3-methylbut-2-enyl diphosphate + 2 reduced [2Fe-2S]-[ferredoxin] + 2 H(+). The enzyme catalyses dimethylallyl diphosphate + 2 oxidized [2Fe-2S]-[ferredoxin] + H2O = (2E)-4-hydroxy-3-methylbut-2-enyl diphosphate + 2 reduced [2Fe-2S]-[ferredoxin] + 2 H(+). Its pathway is isoprenoid biosynthesis; dimethylallyl diphosphate biosynthesis; dimethylallyl diphosphate from (2E)-4-hydroxy-3-methylbutenyl diphosphate: step 1/1. The protein operates within isoprenoid biosynthesis; isopentenyl diphosphate biosynthesis via DXP pathway; isopentenyl diphosphate from 1-deoxy-D-xylulose 5-phosphate: step 6/6. Catalyzes the conversion of 1-hydroxy-2-methyl-2-(E)-butenyl 4-diphosphate (HMBPP) into a mixture of isopentenyl diphosphate (IPP) and dimethylallyl diphosphate (DMAPP). Acts in the terminal step of the DOXP/MEP pathway for isoprenoid precursor biosynthesis. The protein is 4-hydroxy-3-methylbut-2-enyl diphosphate reductase of Salmonella typhi.